Here is a 199-residue protein sequence, read N- to C-terminus: Nicotinamide riboside kinase 1 (199 aa).

ATP is bound at residue 10-18; that stretch reads GVTNSGKTT. 2 residues coordinate Mg(2+): Thr17 and Asp36. The active-site Proton acceptor is the Asp36. Residues 36–39 and 55–56 contribute to the substrate site; these read DDFF and YD. An ATP-binding site is contributed by Arg128. Substrate is bound by residues Arg129 and 134 to 135; that span reads YQ. Residues 132–134 and 172–174 each bind ATP; these read RVY and KSE.

This sequence belongs to the uridine kinase family. NRK subfamily. Monomer.

It catalyses the reaction beta-nicotinamide D-riboside + ATP = beta-nicotinamide D-ribonucleotide + ADP + H(+). It carries out the reaction beta-D-ribosylnicotinate + ATP = nicotinate beta-D-ribonucleotide + ADP + H(+). It participates in cofactor biosynthesis; NAD(+) biosynthesis. Functionally, catalyzes the phosphorylation of nicotinamide riboside (NR) and nicotinic acid riboside (NaR) to form nicotinamide mononucleotide (NMN) and nicotinic acid mononucleotide (NaMN). The enzyme also phosphorylates the antitumor drugs tiazofurin and 3-deazaguanosine. The sequence is that of Nicotinamide riboside kinase 1 (NMRK1) from Homo sapiens (Human).